A 172-amino-acid polypeptide reads, in one-letter code: Small ribosomal subunit protein uS13 (172 aa).

The segment at 131 to 172 (GQRTRTTGRTGVTVGVRRSKAAQAAQQQQKAQASSGGEKKQG) is disordered. The segment covering 134–163 (TRTTGRTGVTVGVRRSKAAQAAQQQQKAQA) has biased composition (low complexity).

Belongs to the universal ribosomal protein uS13 family. In terms of assembly, part of the 30S ribosomal subunit. Forms a loose heterodimer with protein S19. Forms two bridges to the 50S subunit in the 70S ribosome.

Located at the top of the head of the 30S subunit, it contacts several helices of the 16S rRNA. In the 70S ribosome it contacts the 23S rRNA (bridge B1a) and protein L5 of the 50S subunit (bridge B1b), connecting the 2 subunits; these bridges are implicated in subunit movement. The protein is Small ribosomal subunit protein uS13 of Sulfurisphaera tokodaii (strain DSM 16993 / JCM 10545 / NBRC 100140 / 7) (Sulfolobus tokodaii).